The following is a 297-amino-acid chain: HTH-type transcriptional regulator ArgP (297 aa).

Residues 4–60 (PDYRTLQALDAVIRERGFERAAQKLCITQSAVSQRIKQLENLFGQPLLVRTIPPRPT) form the HTH lysR-type domain. The H-T-H motif DNA-binding region spans 21-40 (FERAAQKLCITQSAVSQRIK).

This sequence belongs to the LysR transcriptional regulatory family. As to quaternary structure, homodimer.

Its function is as follows. Controls the transcription of genes involved in arginine and lysine metabolism. The sequence is that of HTH-type transcriptional regulator ArgP from Pectobacterium atrosepticum (strain SCRI 1043 / ATCC BAA-672) (Erwinia carotovora subsp. atroseptica).